The sequence spans 406 residues: Mitochondrial ribosome-associated GTPase 2 (406 aa).

Positions 15–406 (FQGVGHWALS…LGQGRQPLRW (392 aa)) are localized in the mitochondria. The segment at 30–406 (KPSRLLPQRA…LGQGRQPLRW (377 aa)) is not localized in the mitochondria. Positions 70–224 (RYFVDYRRVL…RVLHLELKTV (155 aa)) constitute an Obg domain. The region spanning 225–390 (AHAGMVGFPN…LLLHLKVLYD (166 aa)) is the OBG-type G domain. Residues 231 to 238 (GFPNAGKS), 256 to 260 (FTTLK), 278 to 281 (DIPG), 345 to 348 (NKID), and 371 to 373 (SAL) each bind GTP. Positions 238 and 258 each coordinate Mg(2+).

This sequence belongs to the TRAFAC class OBG-HflX-like GTPase superfamily. OBG GTPase family. In terms of assembly, associates with the mitochondrial ribosome large subunit; the association occurs in a GTP-dependent manner. Requires Mg(2+) as cofactor.

Its subcellular location is the mitochondrion. The protein localises to the mitochondrion inner membrane. Its function is as follows. Plays a role in the regulation of the mitochondrial ribosome assembly and of translational activity. Displays GTPase activity. Involved in the ribosome maturation process. The polypeptide is Mitochondrial ribosome-associated GTPase 2 (MTG2) (Homo sapiens (Human)).